Here is a 68-residue protein sequence, read N- to C-terminus: Large ribosomal subunit protein uL29 (68 aa).

It belongs to the universal ribosomal protein uL29 family.

This is Large ribosomal subunit protein uL29 from Nitrobacter hamburgensis (strain DSM 10229 / NCIMB 13809 / X14).